Consider the following 558-residue polypeptide: Ribonuclease J (558 aa).

Zn(2+) is bound by residues His-81, His-83, Asp-85, His-86, His-148, and Asp-170. Residue 371 to 375 (HVSGH) participates in substrate binding. His-397 contacts Zn(2+).

It belongs to the metallo-beta-lactamase superfamily. RNA-metabolizing metallo-beta-lactamase-like family. Bacterial RNase J subfamily. As to quaternary structure, homodimer. Zn(2+) serves as cofactor.

Its subcellular location is the cytoplasm. In terms of biological role, an RNase that has endonuclease and 5'-3' exonuclease activity. The 5'-exonuclease activity acts on 5'-monophosphate but not 5'-triphosphate ends. Endonuclease activity can cleave within 4 nucleotides of the 5'-end of a triphosphorylated RNA. Plays the major role in pre-23S rRNA maturation, and a minor role in processing of pre-5S and pre-16S rRNA. In Mycolicibacterium smegmatis (strain ATCC 700084 / mc(2)155) (Mycobacterium smegmatis), this protein is Ribonuclease J.